The sequence spans 86 residues: Cell division topological specificity factor (86 aa).

This sequence belongs to the MinE family.

In terms of biological role, prevents the cell division inhibition by proteins MinC and MinD at internal division sites while permitting inhibition at polar sites. This ensures cell division at the proper site by restricting the formation of a division septum at the midpoint of the long axis of the cell. The protein is Cell division topological specificity factor of Rhizobium rhizogenes (strain K84 / ATCC BAA-868) (Agrobacterium radiobacter).